We begin with the raw amino-acid sequence, 144 residues long: Monooxygenase ptaG (144 aa).

This sequence belongs to the avfA family.

It participates in secondary metabolite biosynthesis. In terms of biological role, monooxygenase; part of the gene cluster that mediates the biosynthesis of pestheic acid, a diphenyl ether which is a biosynthetic precursor of the unique chloropupukeananes. The biosynthesis initiates from condensation of acetate and malonate units catalyzed by the non-reducing PKS ptaA. As the ptaA protein is TE/CLC domain-deficient, hydrolysis and Claisen cyclization of the polyketide could be catalyzed by ptaB containing a beta-lactamase domain. The ptaB protein might hydrolyze the thioester bond between the ACP of ptaA and the intermediate to release atrochrysone carboxylic acid, which is spontaneously dehydrated to form endocrocin anthrone. Endocrocin anthrone is then converted to endocrocin, catalyzed by the anthrone oxygenase ptaC. Spontaneous decarboxylation of endocrocin occurs to generate emodin. An O-methyltransferase (ptaH or ptaI) could methylate emodin to form physcion. PtaJ could then catalyze the oxidative cleavage of physcion, and rotation of the intermediate could then afford desmethylisosulochrin. PtaF, a putative NADH-dependent oxidoreductase, might also participate in the oxidative cleavage step. Desmethylisosulochrin is then transformed by another O-methyltransferase (ptaH or ptaI) to form isosulochrin. Chlorination of isosulochrin by ptaM in the cyclohexadienone B ring then produces chloroisosulochrin. PtaE is responsible for the oxidative coupling reactions of both benzophenones isosulochrin and chloroisosulochrin to RES-1214-1 and pestheic acid respectively, regardless of chlorination. This chain is Monooxygenase ptaG, found in Pestalotiopsis fici (strain W106-1 / CGMCC3.15140).